Reading from the N-terminus, the 282-residue chain is Aspergillopepsin-2 (282 aa).

The signal sequence occupies residues 1-18; that stretch reads MKFSTILTGSLFATAALA. Propeptides lie at residues 19–59 and 99–109; these read APLT…GTTN and GGGYGYWKNKR. The segment covering 27 to 39 has biased composition (basic residues); that stretch reads ARKEARAAGKRHS. Residues 27–46 are disordered; that stretch reads ARKEARAAGKRHSNPPYIPG. Q110 is subject to Pyrrolidone carboxylic acid. 2 disulfide bridges follow: C115–C139 and C127–C210.

The protein belongs to the peptidase G1 family. Heterodimer of two noncovalently bound light and heavy chains.

It carries out the reaction Preferential cleavage in B chain of insulin: 3-Asn-|-Gln-4, 13-Gly-|-Ala-14, and 26-Tyr-|-Thr-27.. In Aspergillus niger, this protein is Aspergillopepsin-2.